The following is a 538-amino-acid chain: Syncytin-2 (538 aa).

The signal sequence occupies residues 1-15 (MGLLLLVLILTPSLA). Over 16-478 (AYRHPDFPLL…GWLNWEGTWK (463 aa)) the chain is Extracellular. The CXXC motif lies at 43 to 46 (CWLC). Intrachain disulfides connect Cys-43/Cys-46, Cys-43/Cys-439, and Cys-431/Cys-438. Residues Asn-133, Asn-146, Asn-177, Asn-220, Asn-241, Asn-247, Asn-312, and Asn-332 are each glycosylated (N-linked (GlcNAc...) asparagine). Residues 354-374 (FIPLLAGLGILAGTGTGIAGI) form a fusion peptide region. Positions 414–430 (LQNRRGLDMLTAAQGGI) match the CKS-17 motif. The CX6CC signature appears at 431–439 (CLALDEKCC). Asn-443 carries N-linked (GlcNAc...) asparagine glycosylation. The chain crosses the membrane as a helical span at residues 479–499 (WFSWVLPLTGPLVSLLLLLLF). Topologically, residues 500 to 538 (GPCLLNLITQFVSSRLQAIKLQTNLSAGRHPRNIQESPF) are cytoplasmic.

Belongs to the gamma type-C retroviral envelope protein family. HERV class-I FRD env subfamily. In terms of assembly, the surface and transmembrane proteins form a heterodimer. They are attached by non-covalent interactions or by a labile interchain disulfide bond. Interacts with MFSD2A. Specific enzymatic cleavages in vivo yield the mature SU and TM proteins. Post-translationally, the CXXC motif is highly conserved across a broad range of retroviral envelope proteins. It is thought to participate in the formation of a labile disulfide bond possibly with the CX6CC motif present in the transmembrane protein. Isomerization of the intersubunit disulfide bond to an SU intrachain disulfide bond is thought to occur upon receptor recognition in order to allow membrane fusion. Expressed at higher level in placenta. Expressed at lower level in adrenal, bone marrow, brain, breast, colon, kidney, lung, ovary, peripheral blood lymphocytes, prostate, skin, spleen, testis, thymus, thyroid, trachea.

It localises to the virion. It is found in the cell membrane. This endogenous retroviral envelope protein has retained its original fusogenic properties and participates in trophoblast fusion and the formation of a syncytium during placenta morphogenesis. The interaction with MFSD2A is apparently important for this process. Its function is as follows. Endogenous envelope proteins may have kept, lost or modified their original function during evolution but this one can still make pseudotypes with MLV, HIV-1 or SIV-1 virions and confer infectivity. Retroviral envelope proteins mediate receptor recognition and membrane fusion during early infection. The surface protein mediates receptor recognition, while the transmembrane protein anchors the envelope heterodimer to the viral membrane through one transmembrane domain. The other hydrophobic domain, called fusion peptide, mediates fusion of the viral membrane with the target cell membrane. This chain is Syncytin-2 (ERVFRD-1), found in Homo sapiens (Human).